A 160-amino-acid chain; its full sequence is SsrA-binding protein (160 aa).

The interval 130–160 (LAKGKKKHDKRADQKEQDWQRQKQRLMKHKV) is disordered. Residues 139 to 150 (KRADQKEQDWQR) are compositionally biased toward basic and acidic residues. Positions 151–160 (QKQRLMKHKV) are enriched in basic residues.

It belongs to the SmpB family.

The protein resides in the cytoplasm. In terms of biological role, required for rescue of stalled ribosomes mediated by trans-translation. Binds to transfer-messenger RNA (tmRNA), required for stable association of tmRNA with ribosomes. tmRNA and SmpB together mimic tRNA shape, replacing the anticodon stem-loop with SmpB. tmRNA is encoded by the ssrA gene; the 2 termini fold to resemble tRNA(Ala) and it encodes a 'tag peptide', a short internal open reading frame. During trans-translation Ala-aminoacylated tmRNA acts like a tRNA, entering the A-site of stalled ribosomes, displacing the stalled mRNA. The ribosome then switches to translate the ORF on the tmRNA; the nascent peptide is terminated with the 'tag peptide' encoded by the tmRNA and targeted for degradation. The ribosome is freed to recommence translation, which seems to be the essential function of trans-translation. This chain is SsrA-binding protein, found in Alkalilimnicola ehrlichii (strain ATCC BAA-1101 / DSM 17681 / MLHE-1).